Here is a 712-residue protein sequence, read N- to C-terminus: MGIKGDKKATSDQARLARLTLEGNSGNEEDIQFMIKTIIETTGCTQAQAEIALLDTDNNLYGAIDHILDAGDKLDSWTEQKGAKKEKKKPEEGSYNNRGFVARGRGGGTGFVDRGGRGRSNGAPRESRDNNRDNRDNKEGAAPRSTRGGFEKPYVGRGGRGGARGGYSRAVAPSSALEPDAFTADLDENQTKVDTTVTEVQPPVEESVTATVPTSSAPAPISFAAVAAAAHRKEALRKHQAQNPQPAAPPRRSLSPQPPLPSVAPVKEEPAAAPVFFEPETSHQPEKEDGFFQNESSVLAEEQTPNVSTHHDENVQSTPEPNQAWTTQLKTDLGIGLSEAPGLGLSPIPSAAPVQIIPDPGVEFVGTTAPTNIHDYSFGFVEAAPSPQLPSTESSAASISNASENIFNSSRIMPKQVEPERTSIPNGDYNLKSTSPPLSYGQSNRGLSYDTSSASYQPTDRMAPNKFNNSGPLPTQQSAQQHQPQQQQQQAPQQPVQQQQQTPPAQSQPTGHPQQHPHMMFTQQLPYAPYMNNYMNMYNPMPGVRDEQYTAALMQYGMGVDLTSLLPTAPLSQAASAQQVQSGQQRETHGLMDFNKFGSQSSRDQQPQQASNVGPPPGFQATNYMQQPNLSSLFMQQYSPAPHQFTPFMNMMPNVGSSAGGRQLYGQDDERKSYDKMSGSKPAAQQNQHSQYQHNGGNLGKYGMNKPYNWSN.

Composition is skewed to basic and acidic residues over residues 79-92 (EQKG…KPEE) and 125-141 (RESR…KEGA). Disordered regions lie at residues 79-172 (EQKG…RAVA), 198-217 (TEVQ…TSSA), 228-265 (AAAH…SVAP), 410-517 (SRIM…QQHP), 594-624 (FNKF…ATNY), and 659-712 (AGGR…NWSN). Residues 156 to 165 (GRGGRGGARG) are compositionally biased toward gly residues. The segment covering 241 to 255 (AQNPQPAAPPRRSLS) has biased composition (low complexity). Residues 431–458 (LKSTSPPLSYGQSNRGLSYDTSSASYQP) show a composition bias toward polar residues. Low complexity predominate over residues 474-510 (PTQQSAQQHQPQQQQQQAPQQPVQQQQQTPPAQSQPT). Polar residues-rich tracts occupy residues 597-612 (FGSQ…QASN) and 683-696 (AAQQ…QHNG).

This sequence belongs to the Ubiquitin-associated-like family.

The protein resides in the cytoplasm. Its subcellular location is the stress granule. In terms of biological role, antagonises the activities of multiple heterochronic microRNAs such as lin-4 and let-7 miRNAs. Modulates gene expression and cell fate specification during development. Plays a role in, but not strictly required for, the formation of stress granules. May be involved in protein translation and reducing the expression of mature microRNAs. In Caenorhabditis elegans, this protein is Prion-like (glutamine/asparagine-rich) domain bearing protein pqn-59.